The following is a 625-amino-acid chain: MGFSKIALFSLFALFGLPTSLAKSSEEWRDRIIYQVITDRFAVDSDNTPDCSFDDSSYCGGTWSGIRSKLDYIQGMGFNAIWISPVEKNLEGSYGSDGEAYHGYWNTDFTQLNEHFGSEDDLIDLITDMHNRDMWIMFDALANSMAIPGPTDNISYSNLVPFNDSSYFHPYCWIDYGSNNNTDIEDCWTGDDNVILADLDIESTNVADYLHEHIHDMVERYQIDGIRIDAVKQMNPEFFPNYTSAAGVFAIGEMFSYDPNVSCSVRNYLDSITSYPIRQGIEFAFNYTGAAFEYLQEIDTQFQQACEGQDMSVIGNFLENHDLPRYTSITNDTSQDIGAIVFLLLHTGIPIIYYGEEQRLPGGSDTPENRAALWNYGYDTDANYYQTIRTAIALRKQAISDSDSWTTDSHSYLDYDLRHAVVRKGDVLGVYTNYESSSDNVTYDVSSNFDDGTVLREVLSNTTTTVGSSGALHVTVVSGLPQVYYPEASLTSFGNFLGTATSYSSASASYPSTSMSASLSSVHTSSATSSSKSSSSSSSRSGSSSSSSSRSGSTSSSGSSHTITSTSQSVHTSGSSTSTSSVAVTSTAYSSSSSSSSSSSIESSANAVRVSILGVAAFIAIVLFI.

The first 22 residues, Met-1–Ala-22, serve as a signal peptide directing secretion. A disulfide bridge connects residues Cys-51 and Cys-59. Trp-105 contacts substrate. Ca(2+) is bound at residue Asn-143. Asn-153, Asn-163, and Asn-180 each carry an N-linked (GlcNAc...) asparagine glycan. Cys-172 and Cys-187 form a disulfide bridge. Positions 185 and 198 each coordinate Ca(2+). Position 227 (Arg-227) interacts with substrate. Ca(2+) is bound at residue Asp-229. The active-site Nucleophile is Asp-229. Substrate is bound at residue Lys-232 to Gln-233. Asn-241 carries N-linked (GlcNAc...) asparagine glycosylation. Glu-253 contacts Ca(2+). Glu-253 functions as the Proton donor in the catalytic mechanism. N-linked (GlcNAc...) asparagine glycosylation is found at Asn-260 and Asn-286. Cys-263 and Cys-306 form a disulfide bridge. A substrate-binding site is contributed by Asp-322. An N-linked (GlcNAc...) asparagine glycan is attached at Asn-331. Arg-370 is a binding site for substrate. Asn-440 and Asn-461 each carry an N-linked (GlcNAc...) asparagine glycan. A disordered region spans residues Ser-526–Thr-579. The GPI-anchor amidated serine moiety is linked to residue Ser-603. Positions Ser-604–Ile-625 are cleaved as a propeptide — removed in mature form.

Belongs to the glycosyl hydrolase 13 family. It depends on Ca(2+) as a cofactor.

The protein resides in the cell membrane. It carries out the reaction Endohydrolysis of (1-&gt;4)-alpha-D-glucosidic linkages in polysaccharides containing three or more (1-&gt;4)-alpha-linked D-glucose units.. This chain is Alpha-amylase 1 (aah1), found in Schizosaccharomyces pombe (strain 972 / ATCC 24843) (Fission yeast).